A 516-amino-acid chain; its full sequence is Maturase K (516 aa).

The protein belongs to the intron maturase 2 family. MatK subfamily.

The protein localises to the plastid. Its subcellular location is the chloroplast. Functionally, usually encoded in the trnK tRNA gene intron. Probably assists in splicing its own and other chloroplast group II introns. The chain is Maturase K from Disporum sessile (Japanese fairy bells).